Here is a 248-residue protein sequence, read N- to C-terminus: Phosphatidylglycerol--prolipoprotein diacylglyceryl transferase (248 aa).

3 helical membrane passes run 6-26, 48-68, and 84-104; these read FSIF…GVIL, ILVW…VIFE, and GGGL…YVIC. Residue R130 participates in a 1,2-diacyl-sn-glycero-3-phospho-(1'-sn-glycerol) binding. Transmembrane regions (helical) follow at residues 187 to 207 and 214 to 234; these read GQIT…VEGL and IGAL…GVIL.

The protein belongs to the Lgt family.

It localises to the cell membrane. The enzyme catalyses L-cysteinyl-[prolipoprotein] + a 1,2-diacyl-sn-glycero-3-phospho-(1'-sn-glycerol) = an S-1,2-diacyl-sn-glyceryl-L-cysteinyl-[prolipoprotein] + sn-glycerol 1-phosphate + H(+). Its pathway is protein modification; lipoprotein biosynthesis (diacylglyceryl transfer). Its function is as follows. Catalyzes the transfer of the diacylglyceryl group from phosphatidylglycerol to the sulfhydryl group of the N-terminal cysteine of a prolipoprotein, the first step in the formation of mature lipoproteins. The chain is Phosphatidylglycerol--prolipoprotein diacylglyceryl transferase from Finegoldia magna (strain ATCC 29328 / DSM 20472 / WAL 2508) (Peptostreptococcus magnus).